The primary structure comprises 196 residues: MNNAVFVIAAYLLGSISFGILVSKAFGLPDPRTVGSGNPGATNVLRSGKKLAALLTLLGDAAKGWLPVWLAQYYALPVGVVCWVAVAVFLGHLYPVFYRFKGGKGVATALGVLLAFSPLLAGLALLSWIVVFALTRFSSLAALTAAALAPGFAWLLLPQIGYIIVVFVLSLLLIWRHRSNIRKLLDGSEAGFGKKS.

4 helical membrane passes run Asn3–Ser23, Val78–Tyr98, Val112–Phe132, and Trp154–Ile174.

It belongs to the PlsY family. As to quaternary structure, probably interacts with PlsX.

It localises to the cell inner membrane. It catalyses the reaction an acyl phosphate + sn-glycerol 3-phosphate = a 1-acyl-sn-glycero-3-phosphate + phosphate. It functions in the pathway lipid metabolism; phospholipid metabolism. Catalyzes the transfer of an acyl group from acyl-phosphate (acyl-PO(4)) to glycerol-3-phosphate (G3P) to form lysophosphatidic acid (LPA). This enzyme utilizes acyl-phosphate as fatty acyl donor, but not acyl-CoA or acyl-ACP. The protein is Glycerol-3-phosphate acyltransferase of Methylobacillus flagellatus (strain ATCC 51484 / DSM 6875 / VKM B-1610 / KT).